Reading from the N-terminus, the 219-residue chain is Adenylate kinase (219 aa).

ATP is bound at residue 10–15; sequence GAGKGT. The tract at residues 30-59 is NMP; the sequence is STGDMLRAAVKAGTPLGQQAKKIMDEGGLV. AMP-binding positions include Thr-31, Arg-36, 57–59, 85–88, and Gln-92; these read GLV and GFPR. Residues 122–159 are LID; it reads GRRVHPGSGRVYHVTHNPPRQEGKDDVTGEDLVQREDD. Residues Arg-123 and 132 to 133 contribute to the ATP site; that span reads VY. The tract at residues 128–150 is disordered; the sequence is GSGRVYHVTHNPPRQEGKDDVTG. Residues 140-150 show a composition bias toward basic and acidic residues; it reads PRQEGKDDVTG. Positions 156 and 167 each coordinate AMP. Arg-203 contacts ATP.

This sequence belongs to the adenylate kinase family. In terms of assembly, monomer.

It is found in the cytoplasm. The catalysed reaction is AMP + ATP = 2 ADP. The protein operates within purine metabolism; AMP biosynthesis via salvage pathway; AMP from ADP: step 1/1. Its function is as follows. Catalyzes the reversible transfer of the terminal phosphate group between ATP and AMP. Plays an important role in cellular energy homeostasis and in adenine nucleotide metabolism. This is Adenylate kinase from Halorhodospira halophila (strain DSM 244 / SL1) (Ectothiorhodospira halophila (strain DSM 244 / SL1)).